The following is a 63-amino-acid chain: Parvalbumin alpha (63 aa).

EF-hand domains follow at residues 28-38 (IEEEELGLILK) and 39-63 (VLLA…LVSE). Ca(2+) contacts are provided by glutamate 29, glutamate 32, aspartate 45, aspartate 47, aspartate 49, lysine 51, and glutamate 56.

In terms of tissue distribution, detected in muscle and cutaneous mucus. In the skin, detected in cells in the basal region of the glandular epithelium of the dermal mucus glands (at protein level).

It localises to the cytoplasm. It is found in the secreted. Functionally, in muscle, parvalbumin is thought to be involved in relaxation after contraction. It binds two calcium ions. This is Parvalbumin alpha from Rana temporaria (European common frog).